The sequence spans 454 residues: Tetrahydroanabasine acetyltransferase (454 aa).

Residues His164 and Asp389 each act as proton acceptor in the active site.

Belongs to the plant acyltransferase family. Monomer.

The enzyme catalyses tetrahydroanabasine + acetyl-CoA = ammodendrine + CoA. It participates in alkaloid biosynthesis. In terms of biological role, tetrahydroanabasine acetyltransferase involved in the accumulation of quinolizidine type antinutritional alkaloids (QAs) natural products. QAs impart a bitter taste to plants, acting as repellents and toxicants for herbivores and predators, and possess a variety of pharmacological effects, including sedative, anticonvulsant, anti-inflammatory, antiviral, antitumor, antipyretic, anti-hepatitis B, antifibrotic, antiallergic, antidiarrheal, analgesic and antimicrobial activities. Mediates the conversion of tetrahydroanabasine into ammodendrine. This Lupinus albus (White lupine) protein is Tetrahydroanabasine acetyltransferase.